The chain runs to 284 residues: MSAQLINGKEVSQKRLQAVAEAVAQRQQDNLHMPCLAVVLVGGDPASAVYVRNKKTACQKCGIKSLSYELPESTSQEELLALVDRLNADSEVDGILVQLPLPKHLDSQAVLERISPDKDVDGFHPYNVGRLAVKMPLMRPCTPKGVMTLLEAYGIDPKGKKAVVVGASNIVGRPQALELLLARATVTVCHSATENLTDEVAGADILVVGVGIPNFVKGEWIKPGAVVIDVGINRLDDGSLCGDVEFETAKERAAMITPVPGGVGPMTIATLMENTLHAASLHDA.

Residues 166–168 (GAS), Ser191, and Ile232 contribute to the NADP(+) site.

The protein belongs to the tetrahydrofolate dehydrogenase/cyclohydrolase family. As to quaternary structure, homodimer.

The catalysed reaction is (6R)-5,10-methylene-5,6,7,8-tetrahydrofolate + NADP(+) = (6R)-5,10-methenyltetrahydrofolate + NADPH. The enzyme catalyses (6R)-5,10-methenyltetrahydrofolate + H2O = (6R)-10-formyltetrahydrofolate + H(+). Its pathway is one-carbon metabolism; tetrahydrofolate interconversion. Its function is as follows. Catalyzes the oxidation of 5,10-methylenetetrahydrofolate to 5,10-methenyltetrahydrofolate and then the hydrolysis of 5,10-methenyltetrahydrofolate to 10-formyltetrahydrofolate. This is Bifunctional protein FolD from Neisseria meningitidis serogroup A / serotype 4A (strain DSM 15465 / Z2491).